We begin with the raw amino-acid sequence, 512 residues long: Inosine-5'-monophosphate dehydrogenase (512 aa).

CBS domains lie at 110–169 (FIMK…SAPV) and 173–231 (MTRR…PNSS). Residues 268–270 (DSS) and 318–320 (GMG) each bind NAD(+). Positions 320 and 322 each coordinate K(+). Ser323 is an IMP binding site. A K(+)-binding site is contributed by Cys325. Cys325 functions as the Thioimidate intermediate in the catalytic mechanism. IMP contacts are provided by residues 358–360 (DGG), 381–382 (GS), and 405–409 (YRGMG). Arg423 acts as the Proton acceptor in catalysis. Position 435 (Gln435) interacts with IMP. K(+)-binding residues include Glu494 and Gly495. The Microbody targeting signal motif lies at 510–512 (SKL).

It belongs to the IMPDH/GMPR family. Homotetramer. It depends on K(+) as a cofactor.

It is found in the glycosome. It catalyses the reaction IMP + NAD(+) + H2O = XMP + NADH + H(+). It functions in the pathway purine metabolism; XMP biosynthesis via de novo pathway; XMP from IMP: step 1/1. Mycophenolic acid (MPA) is a non-competitive inhibitor that prevents formation of the closed enzyme conformation by binding to the same site as the amobile flap. In contrast, mizoribine monophosphate (MZP) is a competitive inhibitor that induces the closed conformation. MPA is a potent inhibitor of mammalian IMPDHs but a poor inhibitor of the bacterial enzymes. MZP is a more potent inhibitor of bacterial IMPDH. Functionally, catalyzes the conversion of inosine 5'-phosphate (IMP) to xanthosine 5'-phosphate (XMP), the first committed and rate-limiting step in the de novo synthesis of guanine nucleotides, and therefore plays an important role in the regulation of cell growth. This chain is Inosine-5'-monophosphate dehydrogenase, found in Trypanosoma brucei brucei.